A 287-amino-acid chain; its full sequence is Zinc transporter ZIP9 (287 aa).

Residues 4 to 24 (FLSISLLSLAMLVGCYVAGII) form a helical membrane-spanning segment. N-linked (GlcNAc...) asparagine glycosylation is present at Asn29. 5 helical membrane-spanning segments follow: residues 35–55 (LKLVTVLGAGLLCGTALAVIV), 107–127 (AYIGVSLVLGFVFMLLVDQIG), 147–167 (ITTTLGLVVHAAADGVALGAA), 177–197 (LIVFVAIMLHKAPAAFGLVSF), and 211–231 (HLLVFALAAPAMSMLTYLGLS). Asn242 is a glycosylation site (N-linked (GlcNAc...) asparagine). Residues 245-265 (GVAMLFSAGTFLYVATVHVLP) form a helical membrane-spanning segment. The tract at residues 268–287 (TSTNQSGSSLSPRPLPSGKN) is disordered. Asn271 carries an N-linked (GlcNAc...) asparagine glycan. Low complexity predominate over residues 273–287 (SGSSLSPRPLPSGKN).

This sequence belongs to the ZIP transporter (TC 2.A.5) family.

Its subcellular location is the golgi apparatus. It localises to the trans-Golgi network membrane. It is found in the cell membrane. The protein localises to the cytoplasm. The protein resides in the perinuclear region. Its subcellular location is the mitochondrion. It localises to the nucleus. The enzyme catalyses Zn(2+)(in) = Zn(2+)(out). Transports zinc ions across cell and organelle membranes into the cytoplasm and regulates intracellular zinc homeostasis. Participates in the zinc ions efflux out of the secretory compartments. Regulates intracellular zinc level, resulting in the enhancement of AKT1 and MAPK3/MAPK1 (Erk1/2) phosphorylation in response to the BCR activation. Also functions as a membrane androgen receptor that mediates, through a G protein, the non-classical androgen signaling pathway, characterized by the activation of MAPK3/MAPK1 (Erk1/2) and transcription factors CREB1 or ATF1. This pathway contributes to CLDN1 and CLDN5 expression and tight junction formation between adjacent Sertoli cells. Mediates androgen-induced vascular endothelial cell proliferation through activation of an inhibitory G protein leading to the AKT1 and MAPK3/MAPK1 (Erk1/2) activation which in turn modulate inhibition (phosphorylation) of GSK3B and CCND1 transcription. Moreover, has dual functions as a membrane-bound androgen receptor and as an androgen-dependent zinc transporter both of which are mediated through an inhibitory G protein (Gi) that mediates both MAP kinase and zinc signaling leading to the androgen-dependent apoptotic process. In Rattus norvegicus (Rat), this protein is Zinc transporter ZIP9.